The sequence spans 153 residues: Pro-corazonin (153 aa).

The N-terminal stretch at 1 to 20 (MLRLLLLPLFLFTLSMACMG) is a signal peptide. Residue Gln21 is modified to Pyrrolidone carboxylic acid. Asn31 is subject to Asparagine amide. The propeptide occupies 64-153 (LERCLLQLQH…AVEPNDYGKH (90 aa)).

It belongs to the corazonin family. As to expression, expression is restricted to 24 neurons in the larval CNS (8 in the brain and 16 in the ventral nerve cord) and 12-16 neurons in the pars lateralis of the adult brain.

The protein resides in the secreted. In terms of biological role, cardioactive peptide. Corazonin is probably involved in the physiological regulation of the heart beat. Clock (Clk) and cycle (cyc) proteins negatively regulate Crz transcription in a cell-specific manner. The chain is Pro-corazonin (Crz) from Drosophila virilis (Fruit fly).